We begin with the raw amino-acid sequence, 675 residues long: Secretogranin-1 (675 aa).

The N-terminal stretch at Met-1 to Ser-20 is a signal peptide. A disulfide bridge connects residues Cys-36 and Cys-57. The segment covering Ser-64 to Ser-90 has biased composition (basic and acidic residues). Disordered stretches follow at residues Ser-64–Thr-507 and Asn-528–Thr-555. 5 positions are modified to phosphoserine: Ser-93, Ser-99, Ser-100, Ser-129, and Ser-147. The O-linked (Xyl...) (chondroitin sulfate) serine glycan is linked to Ser-93. Composition is skewed to basic and acidic residues over residues Lys-148–Lys-161 and Gly-168–Glu-248. A Phosphoserine modification is found at Ser-190. O-linked (Xyl...) (chondroitin sulfate) serine glycosylation is present at Ser-236. Residues Pro-250 to Ala-269 show a composition bias toward acidic residues. Ser-255, Ser-259, Ser-291, Ser-309, and Ser-333 each carry phosphoserine. Residues Tyr-292 to Asp-311 are compositionally biased toward basic and acidic residues. Tyr-339 is modified (sulfotyrosine). Composition is skewed to basic and acidic residues over residues Gly-361–Lys-410 and Ser-429–Lys-452. Residues Ser-362, Ser-372, Ser-375, and Ser-397 each carry the phosphoserine modification. The residue at position 469 (Tyr-469) is a Sulfotyrosine. A phosphoserine mark is found at Ser-490, Ser-529, and Ser-540. At Tyr-563 the chain carries Sulfotyrosine. Positions Asp-620–Leu-646 are disordered. Sulfotyrosine; partial is present on Tyr-622. Ser-624 is subject to Phosphoserine. A compositionally biased stretch (basic and acidic residues) spans Glu-637–Leu-646. Arginine amide; in CCB peptide short form is present on Arg-674.

Belongs to the chromogranin/secretogranin protein family. In terms of assembly, interacts with ITPR1 in the secretory granules. Extensively processed in glucagonoma tissue by limited proteolysis at conserved basic residues. Alternative processing are seen in different tissues. The proglucagon-converting enzymes present in transformed alpha-cells are likely candidates to be involved in tissue-specific processing. In terms of tissue distribution, expressed in the brain, adrenal medulla and anterior pituitary. In the brain, localized to the hippocampal formation, the endocrine hypothalamus, the olfactory system, and in anatomically distinct structures in the pons-medulla.

The protein localises to the secreted. In terms of biological role, secretogranin-1 is a neuroendocrine secretory granule protein, which may be the precursor for other biologically active peptides. In Rattus norvegicus (Rat), this protein is Secretogranin-1 (Chgb).